The chain runs to 336 residues: Foldase protein PrsA (336 aa).

The first 22 residues, 1–22, serve as a signal peptide directing secretion; the sequence is MKSAKKLLSVLCLGIFILTFTA. C23 carries N-palmitoyl cysteine lipidation. Residue C23 is the site of S-diacylglycerol cysteine attachment. In terms of domain architecture, PpiC spans 194–286; sequence PNTMNVSHIL…FGYHIIKINS (93 aa).

The protein belongs to the PrsA family.

It localises to the cell membrane. It carries out the reaction [protein]-peptidylproline (omega=180) = [protein]-peptidylproline (omega=0). Plays a major role in protein secretion by helping the post-translocational extracellular folding of several secreted proteins. This is Foldase protein PrsA from Clostridium botulinum (strain 657 / Type Ba4).